Reading from the N-terminus, the 878-residue chain is Protein translocase subunit SecA (878 aa).

ATP-binding positions include Q79, 97-101, and D487; that span reads GEGKT.

Belongs to the SecA family.

The protein localises to the plastid. It is found in the chloroplast stroma. Its subcellular location is the chloroplast thylakoid membrane. It catalyses the reaction ATP + H2O + cellular proteinSide 1 = ADP + phosphate + cellular proteinSide 2.. Functionally, has a central role in coupling the hydrolysis of ATP to the transfer of proteins across the thylakoid membrane. The protein is Protein translocase subunit SecA of Antithamnion sp. (Red alga).